Reading from the N-terminus, the 654-residue chain is Acetyl-coenzyme A synthetase (654 aa).

CoA contacts are provided by residues 190–193 (RGGK) and Thr-313. ATP is bound by residues 389-391 (GEP), 413-418 (DTWWQT), Asp-504, and Arg-519. Ser-527 contacts CoA. Arg-530 contributes to the ATP binding site. Mg(2+)-binding residues include Val-541 and Val-546. Lys-613 is modified (N6-acetyllysine).

The protein belongs to the ATP-dependent AMP-binding enzyme family. The cofactor is Mg(2+). Post-translationally, acetylated. Deacetylation by the SIR2-homolog deacetylase activates the enzyme.

It carries out the reaction acetate + ATP + CoA = acetyl-CoA + AMP + diphosphate. Its function is as follows. Catalyzes the conversion of acetate into acetyl-CoA (AcCoA), an essential intermediate at the junction of anabolic and catabolic pathways. AcsA undergoes a two-step reaction. In the first half reaction, AcsA combines acetate with ATP to form acetyl-adenylate (AcAMP) intermediate. In the second half reaction, it can then transfer the acetyl group from AcAMP to the sulfhydryl group of CoA, forming the product AcCoA. In Leptospira borgpetersenii serovar Hardjo-bovis (strain L550), this protein is Acetyl-coenzyme A synthetase.